The primary structure comprises 592 residues: Aspartate--tRNA ligase (592 aa).

Glutamate 171 lines the L-aspartate pocket. Positions 195 to 198 (QLFK) are aspartate. Arginine 217 provides a ligand contact to L-aspartate. Residues 217-219 (RDE) and glutamine 226 contribute to the ATP site. Histidine 448 contributes to the L-aspartate binding site. Residue glutamate 482 participates in ATP binding. Arginine 489 provides a ligand contact to L-aspartate. Residue 534 to 537 (GLDR) participates in ATP binding.

The protein belongs to the class-II aminoacyl-tRNA synthetase family. Type 1 subfamily. As to quaternary structure, homodimer.

Its subcellular location is the cytoplasm. The enzyme catalyses tRNA(Asp) + L-aspartate + ATP = L-aspartyl-tRNA(Asp) + AMP + diphosphate. In terms of biological role, catalyzes the attachment of L-aspartate to tRNA(Asp) in a two-step reaction: L-aspartate is first activated by ATP to form Asp-AMP and then transferred to the acceptor end of tRNA(Asp). This Pseudoalteromonas translucida (strain TAC 125) protein is Aspartate--tRNA ligase.